The sequence spans 513 residues: GMP synthase [glutamine-hydrolyzing] (513 aa).

One can recognise a Glutamine amidotransferase type-1 domain in the interval lysine 8–asparagine 198. Catalysis depends on cysteine 85, which acts as the Nucleophile. Catalysis depends on residues histidine 172 and glutamate 174. In terms of domain architecture, GMPS ATP-PPase spans tryptophan 199–arginine 388. ATP is bound at residue serine 226–serine 232.

Homodimer.

The enzyme catalyses XMP + L-glutamine + ATP + H2O = GMP + L-glutamate + AMP + diphosphate + 2 H(+). Its pathway is purine metabolism; GMP biosynthesis; GMP from XMP (L-Gln route): step 1/1. Functionally, catalyzes the synthesis of GMP from XMP. The protein is GMP synthase [glutamine-hydrolyzing] of Lactococcus lactis subsp. cremoris (strain SK11).